Reading from the N-terminus, the 787-residue chain is Exocyst complex component SEC15B (787 aa).

It belongs to the SEC15 family. In terms of assembly, the exocyst complex is composed of SEC3, SEC5, SEC6, SEC8, SEC10, EXO70A1 and EXO84B. Interacts with EXO84B. Binds to EXO70H1 AND EXO70B2. Binds directly to B1L.

Its subcellular location is the cytoplasm. The protein localises to the cytosol. It is found in the cytoskeleton. The protein resides in the phragmoplast. It localises to the secreted. Its subcellular location is the cell wall. The protein localises to the extracellular exosome. Component of the exocyst complex involved in the docking of exocytic vesicles with fusion sites on the plasma membrane during regulated or polarized secretion. Involved in polarized cell growth and organ morphogenesis. During cytokinesis, involved in cell plate initiation, cell plate maturation and formation of new primary cell wall. The sequence is that of Exocyst complex component SEC15B from Arabidopsis thaliana (Mouse-ear cress).